A 262-amino-acid chain; its full sequence is 3-methyl-2-oxobutanoate hydroxymethyltransferase (262 aa).

Mg(2+) is bound by residues aspartate 44 and aspartate 83. Residues 44 to 45, aspartate 83, and lysine 112 contribute to the 3-methyl-2-oxobutanoate site; that span reads DS. Position 114 (glutamate 114) interacts with Mg(2+). Residue glutamate 177 is the Proton acceptor of the active site.

The protein belongs to the PanB family. In terms of assembly, homodecamer; pentamer of dimers. Mg(2+) is required as a cofactor.

It localises to the cytoplasm. The enzyme catalyses 3-methyl-2-oxobutanoate + (6R)-5,10-methylene-5,6,7,8-tetrahydrofolate + H2O = 2-dehydropantoate + (6S)-5,6,7,8-tetrahydrofolate. It functions in the pathway cofactor biosynthesis; coenzyme A biosynthesis. In terms of biological role, catalyzes the reversible reaction in which hydroxymethyl group from 5,10-methylenetetrahydrofolate is transferred onto alpha-ketoisovalerate to form ketopantoate. The sequence is that of 3-methyl-2-oxobutanoate hydroxymethyltransferase from Metallosphaera sedula (strain ATCC 51363 / DSM 5348 / JCM 9185 / NBRC 15509 / TH2).